The primary structure comprises 425 residues: 3-phosphoshikimate 1-carboxyvinyltransferase (425 aa).

3-phosphoshikimate-binding residues include K21, S22, and R26. K21 contacts phosphoenolpyruvate. Residues G91 and R119 each coordinate phosphoenolpyruvate. Residues S164, Q166, D311, and K338 each contribute to the 3-phosphoshikimate site. Q166 contributes to the phosphoenolpyruvate binding site. Catalysis depends on D311, which acts as the Proton acceptor. Residues R342 and R383 each coordinate phosphoenolpyruvate.

It belongs to the EPSP synthase family. Monomer.

It is found in the cytoplasm. It catalyses the reaction 3-phosphoshikimate + phosphoenolpyruvate = 5-O-(1-carboxyvinyl)-3-phosphoshikimate + phosphate. It participates in metabolic intermediate biosynthesis; chorismate biosynthesis; chorismate from D-erythrose 4-phosphate and phosphoenolpyruvate: step 6/7. Its function is as follows. Catalyzes the transfer of the enolpyruvyl moiety of phosphoenolpyruvate (PEP) to the 5-hydroxyl of shikimate-3-phosphate (S3P) to produce enolpyruvyl shikimate-3-phosphate and inorganic phosphate. The polypeptide is 3-phosphoshikimate 1-carboxyvinyltransferase (Campylobacter fetus subsp. fetus (strain 82-40)).